We begin with the raw amino-acid sequence, 1047 residues long: Ribonucleoside-diphosphate reductase subunit alpha (1047 aa).

3 ATP-cone domains span residues 9 to 111 (CTIV…KAHR), 118 to 219 (LSVV…ARVR), and 237 to 327 (VEVL…EALG). Substrate contacts are provided by residues Thr442, 457-458 (SC), Gly486, 670-674 (NLCTE), and 857-861 (PTATI). Cysteines 458 and 687 form a disulfide. The active-site Proton acceptor is Asn670. Residue Cys672 is the Cysteine radical intermediate of the active site. Glu674 (proton acceptor) is an active-site residue.

Belongs to the ribonucleoside diphosphate reductase large chain family. As to quaternary structure, tetramer of two alpha and two beta subunits.

The catalysed reaction is a 2'-deoxyribonucleoside 5'-diphosphate + [thioredoxin]-disulfide + H2O = a ribonucleoside 5'-diphosphate + [thioredoxin]-dithiol. With respect to regulation, under complex allosteric control mediated by deoxynucleoside triphosphates and ATP binding. The type of nucleotide bound at the specificity site determines substrate preference. It seems probable that ATP makes the enzyme reduce CDP and UDP, dGTP favors ADP reduction and dTTP favors GDP reduction. Functionally, provides the precursors necessary for DNA synthesis. Catalyzes the biosynthesis of deoxyribonucleotides from the corresponding ribonucleotides. This is Ribonucleoside-diphosphate reductase subunit alpha (nrdA) from Chlamydia trachomatis serovar D (strain ATCC VR-885 / DSM 19411 / UW-3/Cx).